We begin with the raw amino-acid sequence, 396 residues long: N-acyl-phosphatidylethanolamine-hydrolyzing phospholipase D (396 aa).

Position 1 is an N-acetylmethionine (Met-1). 2 stretches are compositionally biased toward polar residues: residues 1 to 12 and 26 to 37; these read MDENENSQSPAP and NSVQNSGGSESS. Residues 1 to 41 form a disordered region; that stretch reads MDENENSQSPAPSHQYPKETLRKRQNSVQNSGGSESSRLSR. Zn(2+) is bound by residues His-185 and His-187. Tyr-188 is an an N-acyl-1,2-diacyl-sn-glycero-3-phosphoethanolamine binding site. Residues Asp-189, His-190, and His-253 each coordinate Zn(2+). Lys-256 is a deoxycholate binding site. Asp-284 is a Zn(2+) binding site. An an N-acyl-1,2-diacyl-sn-glycero-3-phosphoethanolamine-binding site is contributed by His-321. His-343 is a binding site for Zn(2+). Residue Ala-348 coordinates deoxycholate.

Belongs to the NAPE-PLD family. As to quaternary structure, homodimer. Bile acids promote the assembly of inactive monomers into an active dimer and enable catalysis. Requires Zn(2+) as cofactor. As to expression, widely expressed. Highest expression in brain, kidney and testis (at protein level). Expressed in adipose tissue (at protein level).

Its subcellular location is the golgi apparatus membrane. It localises to the early endosome membrane. It is found in the nucleus envelope. The protein resides in the nucleus. The protein localises to the nucleoplasm. The enzyme catalyses an N-acyl-1,2-diacyl-sn-glycero-3-phosphoethanolamine + H2O = an N-acylethanolamine + a 1,2-diacyl-sn-glycero-3-phosphate + H(+). It carries out the reaction N-butanoyl-1-hexadecanoyl-2-(9Z,12Z-octadecadienoyl)-sn-glycero-3-phosphoethanolamine + H2O = N-butanoyl ethanolamine + 1-hexadecanoyl-2-(9Z,12Z-octadecadienoyl)-sn-glycero-3-phosphate + H(+). The catalysed reaction is N-hexanoyl-1-hexadecanoyl-2-(9Z,12Z-octadecadienoyl)-sn-glycero-3-phosphoethanolamine + H2O = N-hexanoyl ethanolamine + 1-hexadecanoyl-2-(9Z,12Z-octadecadienoyl)-sn-glycero-3-phosphate + H(+). It catalyses the reaction N-octanoyl-1-hexadecanoyl-2-(9Z,12Z-octadecadienoyl)-sn-glycero-3-phosphoethanolamine + H2O = N-octanoyl ethanolamine + 1-hexadecanoyl-2-(9Z,12Z-octadecadienoyl)-sn-glycero-3-phosphate + H(+). The enzyme catalyses N-decanoyl-1-hexadecanoyl-2-(9Z,12Z-octadecadienoyl)-sn-glycero-3-phosphoethanolamine + H2O = N-decanoyl ethanolamine + 1-hexadecanoyl-2-(9Z,12Z-octadecadienoyl)-sn-glycero-3-phosphate + H(+). It carries out the reaction N-dodecanoyl-1,2-di-(9Z-octadecenoyl)-sn-glycero-3-phosphoethanolamine + H2O = N-dodecanoylethanolamine + 1,2-di-(9Z-octadecenoyl)-sn-glycero-3-phosphate + H(+). The catalysed reaction is N-tetradecanoyl-1,2-di-(9Z-octadecenoyl)-sn-glycero-3-phosphoethanolamine + H2O = N-tetradecanoylethanolamine + 1,2-di-(9Z-octadecenoyl)-sn-glycero-3-phosphate + H(+). It catalyses the reaction N-hexadecanoyl-1,2-di-(9Z-octadecenoyl)-sn-glycero-3-phosphoethanolamine + H2O = N-hexadecanoylethanolamine + 1,2-di-(9Z-octadecenoyl)-sn-glycero-3-phosphate + H(+). The enzyme catalyses N,1-dihexadecanoyl-2-(9Z,12Z-octadecadienoyl)-sn-glycero-3-phosphoethanolamine + H2O = 1-hexadecanoyl-2-(9Z,12Z-octadecadienoyl)-sn-glycero-3-phosphate + N-hexadecanoylethanolamine + H(+). It carries out the reaction N-octadecanoyl-1,2-di-(9Z-octadecenoyl)-sn-glycero-3-phosphoethanolamine + H2O = N-octadecanoyl ethanolamine + 1,2-di-(9Z-octadecenoyl)-sn-glycero-3-phosphate + H(+). The catalysed reaction is N,1,2-tri-(9Z-octadecenoyl)-sn-glycero-3-phosphoethanolamine + H2O = N-(9Z-octadecenoyl) ethanolamine + 1,2-di-(9Z-octadecenoyl)-sn-glycero-3-phosphate + H(+). It catalyses the reaction N-(5Z,8Z,11Z,14Z-eicosatetraenoyl)-1,2-diacyl-sn-glycero-3-phosphoethanolamine + H2O = N-(5Z,8Z,11Z,14Z-eicosatetraenoyl)-ethanolamine + a 1,2-diacyl-sn-glycero-3-phosphate + H(+). The enzyme catalyses N-(5Z,8Z,11Z,14Z-eicosatetraenoyl)-1,2-di-(9Z-octadecenoyl)-sn-glycero-3-phosphoethanolamine + H2O = N-(5Z,8Z,11Z,14Z-eicosatetraenoyl)-ethanolamine + 1,2-di-(9Z-octadecenoyl)-sn-glycero-3-phosphate + H(+). It carries out the reaction 1-O-(1Z-octadecenoyl)-2-(9Z-octadecenoyl)-sn-glycero-3-phospho-N-hexadecanoyl-ethanolamine + H2O = 1-O-(1Z-octadecenoyl)-2-(9Z-octadecenoyl)-sn-glycero-3-phosphate + N-hexadecanoylethanolamine + H(+). The catalysed reaction is N,1-diacyl-sn-glycero-3-phosphoethanolamine + H2O = an N-acylethanolamine + a 1-acyl-sn-glycero-3-phosphate + H(+). It catalyses the reaction N,1-dihexadecanoyl-sn-glycero-3-phosphoethanolamine + H2O = N-hexadecanoylethanolamine + 1-hexadecanoyl-sn-glycero-3-phosphate + H(+). The enzyme catalyses N-(5Z,8Z,11Z,14Z-eicosatetraenoyl)-1-(9Z-octadecenoyl)-sn-glycero-3-phosphoethanolamine + H2O = N-(5Z,8Z,11Z,14Z-eicosatetraenoyl)-ethanolamine + 1-(9Z-octadecenoyl)-sn-glycero-3-phosphate + H(+). Its activity is regulated as follows. Activated by divalent cations. Activated by bile acids. Activated by membrane phospholipids such as phosphatidylethanolamines. Inhibited by cardiolipins. D-type phospholipase that hydrolyzes N-acyl-phosphatidylethanolamines (NAPEs) to produce bioactive N-acylethanolamines/fatty acid ethanolamides (NAEs/FAEs) and phosphatidic acid. Cleaves the terminal phosphodiester bond of diacyl- and alkenylacyl-NAPEs, primarily playing a role in the generation of long-chain saturated and monounsaturated NAEs in the brain. May control NAPE homeostasis in dopaminergic neuron membranes and regulate neuron survival, partly through RAC1 activation. As a regulator of lipid metabolism in the adipose tissue, mediates the crosstalk between adipocytes, gut microbiota and immune cells to control body temperature and weight. In particular, regulates energy homeostasis by promoting cold-induced brown or beige adipocyte differentiation program to generate heat from fatty acids and glucose. Has limited D-type phospholipase activity toward N-acyl lyso-NAPEs. The chain is N-acyl-phosphatidylethanolamine-hydrolyzing phospholipase D (Napepld) from Rattus norvegicus (Rat).